Reading from the N-terminus, the 158-residue chain is Transcription elongation factor GreA (158 aa).

Belongs to the GreA/GreB family.

Functionally, necessary for efficient RNA polymerase transcription elongation past template-encoded arresting sites. The arresting sites in DNA have the property of trapping a certain fraction of elongating RNA polymerases that pass through, resulting in locked ternary complexes. Cleavage of the nascent transcript by cleavage factors such as GreA or GreB allows the resumption of elongation from the new 3'terminus. GreA releases sequences of 2 to 3 nucleotides. The polypeptide is Transcription elongation factor GreA (Pseudomonas syringae pv. tomato (strain ATCC BAA-871 / DC3000)).